A 295-amino-acid chain; its full sequence is Inorganic pyrophosphatase 1 (295 aa).

Asp-19 functions as the Nucleophile in the catalytic mechanism. Mg(2+)-binding residues include Asp-19 and Asp-21. Asp-21 serves as the catalytic Proton donor. Substrate is bound by residues Asp-30 and Asp-105. Asp-190 contributes to the Mg(2+) binding site.

It belongs to the HAD-like hydrolase superfamily. Tetramer. The cofactor is Mg(2+). Fe(2+) is required as a cofactor. Ni(2+) serves as cofactor. Requires Co(2+) as cofactor. It depends on Mn(2+) as a cofactor.

The enzyme catalyses diphosphate + H2O = 2 phosphate + H(+). Catalyzes the specific cleavage of pyrophosphate. This chain is Inorganic pyrophosphatase 1 (PS2), found in Arabidopsis thaliana (Mouse-ear cress).